The chain runs to 345 residues: uncharacterized protein (345 aa).

It is found in the cell membrane. Involved in potassium and divalent cation transport. Enhances the transport activity of the cation/potassium transporter CzcD. This is an uncharacterized protein from Bacillus subtilis (strain 168).